Here is a 209-residue protein sequence, read N- to C-terminus: Hyperpolarization-activated voltage-gated potassium channel (209 aa).

Residues 1–10 (MNLKDRRLKK) lie on the Cytoplasmic side of the membrane. Residues 11-31 (IMEVLSLIFTFEIVASFILST) traverse the membrane as a helical segment. The Extracellular segment spans residues 32–38 (YNPPYQD). The helical transmembrane segment at 39-59 (LLIKLDYISIMFFTFEFIYNF) threads the bilayer. At 60–71 (YYVEDKAKFFKD) the chain is on the cytoplasmic side. Residues 72–92 (IYNIVDAIVVIAFLLYSLQVF) traverse the membrane as a helical segment. The Extracellular portion of the chain corresponds to 93 to 96 (YSKA). A helical; Voltage-sensor transmembrane segment spans residues 97 to 117 (FLGLRVINLLRILVLLRIIKL). Topologically, residues 118 to 125 (RKLEENQA) are cytoplasmic. A helical transmembrane segment spans residues 126-146 (LINFLTLLTICFIASCLIWIV). The Extracellular segment spans residues 147–181 (ESGVNPAINNFFDAFYFTTISITTVGYGDITPKTD). A Selectivity filter motif is present at residues 170-175 (TVGYGD). The helical transmembrane segment at 182 to 202 (AGKLIIIFSVLFFISGLITSL) threads the bilayer. At 203-209 (QKALKGD) the chain is on the cytoplasmic side.

It belongs to the potassium channel family. In terms of assembly, homotetramer.

It is found in the cell membrane. Its function is as follows. Voltage-gated potassium-selective channel opened by hyperpolarization. The chain is Hyperpolarization-activated voltage-gated potassium channel (mvp) from Methanocaldococcus jannaschii (strain ATCC 43067 / DSM 2661 / JAL-1 / JCM 10045 / NBRC 100440) (Methanococcus jannaschii).